The sequence spans 144 residues: Large ribosomal subunit protein uL16 (144 aa).

The protein belongs to the universal ribosomal protein uL16 family. As to quaternary structure, part of the 50S ribosomal subunit.

Functionally, binds 23S rRNA and is also seen to make contacts with the A and possibly P site tRNAs. The chain is Large ribosomal subunit protein uL16 from Clostridium botulinum (strain Alaska E43 / Type E3).